The sequence spans 423 residues: Gamma-glutamyl phosphate reductase (423 aa).

The protein belongs to the gamma-glutamyl phosphate reductase family.

The protein localises to the cytoplasm. It carries out the reaction L-glutamate 5-semialdehyde + phosphate + NADP(+) = L-glutamyl 5-phosphate + NADPH + H(+). The protein operates within amino-acid biosynthesis; L-proline biosynthesis; L-glutamate 5-semialdehyde from L-glutamate: step 2/2. In terms of biological role, catalyzes the NADPH-dependent reduction of L-glutamate 5-phosphate into L-glutamate 5-semialdehyde and phosphate. The product spontaneously undergoes cyclization to form 1-pyrroline-5-carboxylate. The chain is Gamma-glutamyl phosphate reductase from Burkholderia ambifaria (strain MC40-6).